A 425-amino-acid chain; its full sequence is Dihydroorotase (425 aa).

Positions 56 and 58 each coordinate Zn(2+). Residues 58 to 60 and N90 each bind substrate; that span reads HYR. Zn(2+) is bound by residues D148, H175, and H228. Residue N274 coordinates substrate. Residue D301 coordinates Zn(2+). D301 is a catalytic residue. Substrate-binding positions include H305 and 319–320; that span reads FG.

The protein belongs to the metallo-dependent hydrolases superfamily. DHOase family. Class I DHOase subfamily. Requires Zn(2+) as cofactor.

The enzyme catalyses (S)-dihydroorotate + H2O = N-carbamoyl-L-aspartate + H(+). The protein operates within pyrimidine metabolism; UMP biosynthesis via de novo pathway; (S)-dihydroorotate from bicarbonate: step 3/3. Catalyzes the reversible cyclization of carbamoyl aspartate to dihydroorotate. This Lactobacillus helveticus (strain DPC 4571) protein is Dihydroorotase.